We begin with the raw amino-acid sequence, 377 residues long: Testis-expressed protein 13A (377 aa).

Residues 92 to 377 are required for repression of transcription; sequence WLQDLSSLHK…CGKGIWLQNP (286 aa). Positions 122–156 form a coiled coil; the sequence is QKEVALQLQMAQAKLEEVQRERDLLRLKILQAELR. Residues 142–165 form an LRR repeat; the sequence is ERDLLRLKILQAELRALPNAVRPA. A RanBP2-type zinc finger spans residues 345 to 369; that stretch reads RPGDWDCPWCKAVNFSRRENCFHCG. Zn(2+) contacts are provided by cysteine 351, cysteine 354, cysteine 365, and cysteine 368.

This sequence belongs to the TEX13 family. In terms of assembly, interacts with CNOT1; the interaction may inhibit CNOT1 binding to mRNA and subsequently CNOT1-mediated mRNA degradation.

Its function is as follows. Binds to ssRNA containing the consensus sequence 5'-AGGUAA-3'. Plays a role in transcriptional repression. Required for rapid sperm motility and timely degradation of mRNA via its interaction with CNOT1. In Mus musculus (Mouse), this protein is Testis-expressed protein 13A.